A 102-amino-acid chain; its full sequence is RNA-binding protein Hfq (102 aa).

One can recognise a Sm domain in the interval 9-68; sequence DPFLNALRRERVPVSIYLVNGIKLQGQIESFDQFVILLKNTVSQMVYKHAISTVVPSRPV. Residues 64-102 are disordered; it reads PSRPVSHHSNTPSGGTSNYHHGNNPSAPQQPQQESDDAE. Residues 70-96 are compositionally biased toward polar residues; the sequence is HHSNTPSGGTSNYHHGNNPSAPQQPQQ.

This sequence belongs to the Hfq family. Homohexamer.

Its function is as follows. RNA chaperone that binds small regulatory RNA (sRNAs) and mRNAs to facilitate mRNA translational regulation in response to envelope stress, environmental stress and changes in metabolite concentrations. Also binds with high specificity to tRNAs. The chain is RNA-binding protein Hfq from Serratia proteamaculans (strain 568).